Reading from the N-terminus, the 481-residue chain is Subtilisin-like protease 1 (481 aa).

Residues 1-19 form the signal peptide; that stretch reads MGVFRFISISLAAVSAANA. Positions 20–116 are excised as a propeptide; it reads AQILSMPHAQ…VEPDTIISVH (97 aa). Residues 34-115 enclose the Inhibitor I9 domain; the sequence is SYIVMMKDDT…FVEPDTIISV (82 aa). The region spanning 126-400 is the Peptidase S8 domain; that stretch reads SWGLARISSS…NVLINNGGAK (275 aa). Catalysis depends on charge relay system residues aspartate 158 and histidine 190. Positions 175–198 are disordered; sequence GSNQVNDGDDNDRSGHGTHTSGTM. Asparagine 251 carries an N-linked (GlcNAc...) asparagine glycan. The segment at 281-312 is disordered; that stretch reads GNDNTDARSSSPASEPSVCTVGASAEDDSRSS. Polar residues predominate over residues 282–294; that stretch reads NDNTDARSSSPAS. Residue serine 345 is the Charge relay system of the active site. The disordered stretch occupies residues 379–455; that stretch reads ASISDVGPGT…HPHTPFPGGD (77 aa). The segment covering 424 to 450 has biased composition (pro residues); sequence PQQPAPGEPSTPAPAPMPPTPQHPHTP.

Belongs to the peptidase S8 family.

The protein resides in the secreted. Functionally, secreted subtilisin-like serine protease with keratinolytic activity that contributes to pathogenicity. In Arthroderma gypseum (strain ATCC MYA-4604 / CBS 118893) (Microsporum gypseum), this protein is Subtilisin-like protease 1 (SUB1).